The following is a 560-amino-acid chain: Glutamine--tRNA ligase (560 aa).

A 'HIGH' region motif is present at residues 36–46; that stretch reads PEPNGFAHIGH. Residues 37–39 and 43–49 each bind ATP; these read EPN and HIGHAKA. L-glutamine is bound by residues Asp69 and Tyr214. Residue 263-264 participates in ATP binding; the sequence is RL. A 'KMSKS' region motif is present at residues 270–274; the sequence is LTSKR.

Belongs to the class-I aminoacyl-tRNA synthetase family. In terms of assembly, monomer.

Its subcellular location is the cytoplasm. It catalyses the reaction tRNA(Gln) + L-glutamine + ATP = L-glutaminyl-tRNA(Gln) + AMP + diphosphate. The polypeptide is Glutamine--tRNA ligase (Chromobacterium violaceum (strain ATCC 12472 / DSM 30191 / JCM 1249 / CCUG 213 / NBRC 12614 / NCIMB 9131 / NCTC 9757 / MK)).